Consider the following 562-residue polypeptide: uncharacterized protein (562 aa).

This is an uncharacterized protein from Escherichia coli (strain K12).